A 533-amino-acid chain; its full sequence is DNA primase large subunit (533 aa).

C298, C377, C393, and C433 together coordinate [4Fe-4S] cluster. The tract at residues 466–492 is disordered; sequence RQKRANGSAPPKARIRPDIKGHGDRSM. The segment covering 480 to 490 has biased composition (basic and acidic residues); sequence IRPDIKGHGDR.

The protein belongs to the eukaryotic-type primase large subunit family. As to quaternary structure, heterodimer of a catalytic subunit Prim1 and a regulatory subunit Prim2, also known as the DNA primase complex. Component of the alpha DNA polymerase complex (also known as the alpha DNA polymerase-primase complex) consisting of four subunits: the catalytic subunit PolA1, the regulatory subunit PolA2, and the primase complex subunits Prim1 and Prim2 respectively. PolA1 associates with the DNA primase complex before association with PolA2. It depends on [4Fe-4S] cluster as a cofactor. Expressed in embryos (at protein level).

In terms of biological role, regulatory subunit of the DNA primase complex and component of the DNA polymerase alpha complex (also known as the alpha DNA polymerase-primase complex) which play an essential role in the initiation of DNA synthesis. During the S phase of the cell cycle, the DNA polymerase alpha complex (composed of a catalytic subunit PolA1, an accessory subunit PolA2 and two primase subunits, the catalytic subunit Prim1 and the regulatory subunit Prim2) is recruited to DNA at the replicative forks. The primase subunit of the polymerase alpha complex initiates DNA synthesis by oligomerising short RNA primers on both leading and lagging strands. These primers are initially extended by the polymerase alpha catalytic subunit and subsequently transferred to polymerase delta and polymerase epsilon for processive synthesis on the lagging and leading strand, respectively. In the primase complex, both subunits are necessary for the initial di-nucleotide formation, but the extension of the primer depends only on the catalytic subunit. Stabilizes and modulates the activity of the catalytic subunit. The chain is DNA primase large subunit from Drosophila melanogaster (Fruit fly).